A 237-amino-acid chain; its full sequence is 3-oxoacyl-[acyl-carrier-protein] reductase (237 aa).

Residue methionine 1 is modified to N-acetylmethionine. NADP(+)-binding positions include 11–14 (SRGI), 34–35 (RN), aspartate 56, and 83–85 (AAG). Residue serine 135 participates in substrate binding. NADP(+) contacts are provided by residues tyrosine 148, lysine 152, and 181 to 183 (IHT). The Proton acceptor role is filled by tyrosine 148. Lysine 195 carries the N6-acetyllysine modification.

It belongs to the short-chain dehydrogenases/reductases (SDR) family. As to quaternary structure, homotetramer (in vitro). Heterotetramer with HSD17B8; contains two molecules each of HSD17B8 and CBR4. Does not form homotetramers when HSD17B8 is coexpressed, only heterotetramers (in vitro).

The protein resides in the mitochondrion matrix. It catalyses the reaction a (3R)-hydroxyacyl-[ACP] + NADP(+) = a 3-oxoacyl-[ACP] + NADPH + H(+). It carries out the reaction a quinone + NADPH + H(+) = a quinol + NADP(+). Its pathway is lipid metabolism; fatty acid biosynthesis. Functionally, component of the heterotetramer complex KAR (3-ketoacyl-[acyl carrier protein] reductase or 3-ketoacyl-[ACP] reductase) that forms part of the mitochondrial fatty acid synthase (mtFAS). Beta-subunit of the KAR heterotetramer complex, responsible for the 3-ketoacyl-ACP reductase activity of the mtFAS, reduces 3-oxoacyl-[ACP] to (3R)-hydroxyacyl-[ACP] in a NADPH-dependent manner with no chain length preference, thereby participating in mitochondrial fatty acid biosynthesis. The homotetramer has NADPH-dependent quinone reductase activity (in vitro), hence could play a role in protection against cytotoxicity of exogenous quinones. As a heterotetramer, it can also reduce 9,10-phenanthrenequinone, 1,4-benzoquinone and various other o-quinones and p-quinones (in vitro). The chain is 3-oxoacyl-[acyl-carrier-protein] reductase (CBR4) from Bos taurus (Bovine).